The sequence spans 304 residues: 33 kDa chaperonin (304 aa).

2 disulfides stabilise this stretch: C236–C238 and C269–C272.

It belongs to the HSP33 family. In terms of processing, under oxidizing conditions two disulfide bonds are formed involving the reactive cysteines. Under reducing conditions zinc is bound to the reactive cysteines and the protein is inactive.

The protein localises to the cytoplasm. Redox regulated molecular chaperone. Protects both thermally unfolding and oxidatively damaged proteins from irreversible aggregation. Plays an important role in the bacterial defense system toward oxidative stress. The polypeptide is 33 kDa chaperonin (Pelobacter propionicus (strain DSM 2379 / NBRC 103807 / OttBd1)).